Consider the following 632-residue polypeptide: MRFRYKAFLLTLFASTTTLTGFIIPTLSQHGSSTDPSFVALRNNSSLSCDGKSRLLEFGNDLGFSKEETDVLAKQKNWEQNYTNFKKQFEHKLLDPKSFSLTDVYNLFSGFQQSVADTVKLMNELQTQVNKANDIYPVESFQVPKVPQKLFGFVDQGFFPKLNPKGLNIADNVASLFEKYSLKQATLKDFDIVLEKKNDIVLEHKVRYNFALQFHFETTYIGSGGEINLQFALQASTTNFSSLEELQASFSKVGNNLTAQLFWKPVVNKLTSGENDLTHIAQTAVGESLFDSRVDLTSSIINNEAAIKTTQQQFETEVLALFKAEREKALAEYKAEQERIAKELEEQRKELERLKKEQQNKQELVESLYNVANFVSYWEKRGKDVTDKKQLIQALKSAFATNWNEVFQLLTAGMREGIKEYYKHNKPDQSANAKKAFGQNGLAFPRTGFDGIYMSDWLRGELRNKGNINLHLKQNETTVKKIRDDISIEWNESKGGIEFHQTYPYWFEFEVNFKYIGGYSLNWWDAIWAKVAGIPGSWKGEMNLKLVIDGEIHKWMVTKPDYPRTFFQFDDQFDKLWFTLHVSQEISVRDESFMNLLKKQGLDKLDLRTGSTKPPVVDLASYLHYLILADKS.

The protein belongs to the MG032/MG096/MG288 family.

This is an uncharacterized protein from Mycoplasma pneumoniae (strain ATCC 29342 / M129 / Subtype 1) (Mycoplasmoides pneumoniae).